A 150-amino-acid polypeptide reads, in one-letter code: Macrodomain Ter protein (150 aa).

It belongs to the MatP family. In terms of assembly, homodimer.

Its subcellular location is the cytoplasm. Its function is as follows. Required for spatial organization of the terminus region of the chromosome (Ter macrodomain) during the cell cycle. Prevents early segregation of duplicated Ter macrodomains during cell division. Binds specifically to matS, which is a 13 bp signature motif repeated within the Ter macrodomain. This Escherichia coli (strain SMS-3-5 / SECEC) protein is Macrodomain Ter protein.